Reading from the N-terminus, the 150-residue chain is 3-hydroxyacyl-[acyl-carrier-protein] dehydratase FabZ (150 aa).

His56 is a catalytic residue.

Belongs to the thioester dehydratase family. FabZ subfamily.

The protein localises to the cytoplasm. The enzyme catalyses a (3R)-hydroxyacyl-[ACP] = a (2E)-enoyl-[ACP] + H2O. In terms of biological role, involved in unsaturated fatty acids biosynthesis. Catalyzes the dehydration of short chain beta-hydroxyacyl-ACPs and long chain saturated and unsaturated beta-hydroxyacyl-ACPs. In Desulfotalea psychrophila (strain LSv54 / DSM 12343), this protein is 3-hydroxyacyl-[acyl-carrier-protein] dehydratase FabZ.